Consider the following 357-residue polypeptide: UDP-N-acetylglucosamine--N-acetylmuramyl-(pentapeptide) pyrophosphoryl-undecaprenol N-acetylglucosamine transferase (357 aa).

Residues 14 to 16, Asn128, Arg169, Ser193, Ile248, and Gln292 contribute to the UDP-N-acetyl-alpha-D-glucosamine site; that span reads TGG.

The protein belongs to the glycosyltransferase 28 family. MurG subfamily.

Its subcellular location is the cell inner membrane. It carries out the reaction di-trans,octa-cis-undecaprenyl diphospho-N-acetyl-alpha-D-muramoyl-L-alanyl-D-glutamyl-meso-2,6-diaminopimeloyl-D-alanyl-D-alanine + UDP-N-acetyl-alpha-D-glucosamine = di-trans,octa-cis-undecaprenyl diphospho-[N-acetyl-alpha-D-glucosaminyl-(1-&gt;4)]-N-acetyl-alpha-D-muramoyl-L-alanyl-D-glutamyl-meso-2,6-diaminopimeloyl-D-alanyl-D-alanine + UDP + H(+). It functions in the pathway cell wall biogenesis; peptidoglycan biosynthesis. Cell wall formation. Catalyzes the transfer of a GlcNAc subunit on undecaprenyl-pyrophosphoryl-MurNAc-pentapeptide (lipid intermediate I) to form undecaprenyl-pyrophosphoryl-MurNAc-(pentapeptide)GlcNAc (lipid intermediate II). The polypeptide is UDP-N-acetylglucosamine--N-acetylmuramyl-(pentapeptide) pyrophosphoryl-undecaprenol N-acetylglucosamine transferase (Bdellovibrio bacteriovorus (strain ATCC 15356 / DSM 50701 / NCIMB 9529 / HD100)).